A 474-amino-acid chain; its full sequence is Carbohydrate sulfotransferase 3 (474 aa).

Topologically, residues 1–19 (MEKGLALPQDCRDLVHNLK) are cytoplasmic. Residues 20 to 38 (IRGRYVLFLAFVVIVFIFI) traverse the membrane as a helical; Signal-anchor for type II membrane protein segment. The Lumenal portion of the chain corresponds to 39–474 (EKENKIISRV…LEERGTFWVT (436 aa)). Residues N63, N74, and N96 are each glycosylated (N-linked (GlcNAc...) asparagine). Position 137 to 143 (137 to 143 (TRTGSSF)) interacts with 3'-phosphoadenylyl sulfate. N252 carries an N-linked (GlcNAc...) asparagine glycan. 297–305 (RDPRAVLAS) provides a ligand contact to 3'-phosphoadenylyl sulfate. N-linked (GlcNAc...) asparagine glycosylation is found at N415 and N459.

Belongs to the sulfotransferase 1 family. Gal/GlcNAc/GalNAc subfamily. N-glycosylated.

It localises to the golgi apparatus membrane. It carries out the reaction chondroitin beta-D-glucuronate + n 3'-phosphoadenylyl sulfate = chondroitin 6'-sulfate + n adenosine 3',5'-bisphosphate + n H(+). It catalyses the reaction 3'-phosphoadenylyl sulfate + keratan = adenosine 3',5'-bisphosphate + keratan 6'-sulfate.. In terms of biological role, sulfotransferase that utilizes 3'-phospho-5'-adenylyl sulfate (PAPS) as sulfonate donor to catalyze the transfer of sulfate to position 6 of the N-acetylgalactosamine (GalNAc) residue of chondroitin. Chondroitin sulfate constitutes the predominant proteoglycan present in cartilage and is distributed on the surfaces of many cells and extracellular matrices. Catalyzes with a lower efficiency the sulfation of Gal residues of keratan sulfate, another glycosaminoglycan. Can also catalyze the sulfation of the Gal residues in sialyl N-acetyllactosamine (sialyl LacNAc) oligosaccharides. May play a role in the maintenance of naive T-lymphocytes in the spleen. This Rattus norvegicus (Rat) protein is Carbohydrate sulfotransferase 3 (Chst3).